The primary structure comprises 183 residues: Phosphinothricin N-acetyltransferase (183 aa).

The N-acetyltransferase domain occupies 8 to 169; it reads VEIRPATAAD…DVGFWQRDFE (162 aa). Residues 91 to 93, 99 to 104, and Asn130 each bind acetyl-CoA; these read VYV and RLGLGS.

The protein belongs to the acetyltransferase family. PAT/BAR subfamily.

The enzyme catalyses phosphinothricin + acetyl-CoA = N-acetylphosphinothricin + CoA + H(+). Its function is as follows. Inactivates phosphinothricin (PPT) by transfer of an acetyl group from acetyl CoA. This enzyme is an effector of phosphinothricin tripeptide (PTT or bialaphos) resistance. This is Phosphinothricin N-acetyltransferase from Streptomyces viridochromogenes (strain DSM 40736 / JCM 4977 / BCRC 1201 / Tue 494).